Reading from the N-terminus, the 282-residue chain is NADPH-dependent 7-cyano-7-deazaguanine reductase (282 aa).

88–90 (IES) contacts substrate. 90–91 (SK) serves as a coordination point for NADPH. Catalysis depends on Cys-190, which acts as the Thioimide intermediate. The active-site Proton donor is the Asp-197. 229-230 (HE) provides a ligand contact to substrate. Residue 258–259 (RG) coordinates NADPH.

This sequence belongs to the GTP cyclohydrolase I family. QueF type 2 subfamily. In terms of assembly, homodimer.

Its subcellular location is the cytoplasm. The enzyme catalyses 7-aminomethyl-7-carbaguanine + 2 NADP(+) = 7-cyano-7-deazaguanine + 2 NADPH + 3 H(+). It functions in the pathway tRNA modification; tRNA-queuosine biosynthesis. In terms of biological role, catalyzes the NADPH-dependent reduction of 7-cyano-7-deazaguanine (preQ0) to 7-aminomethyl-7-deazaguanine (preQ1). In Escherichia coli O81 (strain ED1a), this protein is NADPH-dependent 7-cyano-7-deazaguanine reductase.